Here is a 355-residue protein sequence, read N- to C-terminus: Galectin-9 (355 aa).

Galectin domains are found at residues 17-148 (FSGT…ISFQ) and 227-355 (FITT…HVQT). A beta-D-galactoside contacts are provided by residues Asn48, His61, Arg65, Asn75, 82 to 88 (WGPEERK), His267, Arg271, Thr281, and 287 to 293 (WGSEERS).

As to quaternary structure, monomer. Peripheral blood leukocytes and lymphatic tissues. Expressed in lung, liver, breast and kidney with higher levels in tumor endothelial cells than normal endothelium (at protein level). Expressed in trophoblast cells in decidua and placenta in pregnancy (at protein level). Isoform 2 is the most abundant isoform expressed in endothelial cells. Upon endothelial cell activation isoform 2 expression decreases while expression of isoform 3 and isoform 5 increases. Isoform 4 decreases in pathological pregnancy.

Its subcellular location is the cytoplasm. The protein localises to the nucleus. It localises to the secreted. In terms of biological role, binds galactosides. Has high affinity for the Forssman pentasaccharide. Ligand for HAVCR2/TIM3. Binding to HAVCR2 induces T-helper type 1 lymphocyte (Th1) death. Also stimulates bactericidal activity in infected macrophages by causing macrophage activation and IL1B secretion which restricts intracellular bacterial growth. Ligand for P4HB; the interaction retains P4HB at the cell surface of Th2 T-helper cells, increasing disulfide reductase activity at the plasma membrane, altering the plasma membrane redox state and enhancing cell migration. Ligand for CD44; the interaction enhances binding of SMAD3 to the FOXP3 promoter, leading to up-regulation of FOXP3 expression and increased induced regulatory T (iTreg) cell stability and suppressive function. Promotes ability of mesenchymal stromal cells to suppress T-cell proliferation. Expands regulatory T-cells and induces cytotoxic T-cell apoptosis following virus infection. Activates ERK1/2 phosphorylation inducing cytokine (IL-6, IL-8, IL-12) and chemokine (CCL2) production in mast and dendritic cells. Inhibits degranulation and induces apoptosis of mast cells. Induces maturation and migration of dendritic cells. Inhibits natural killer (NK) cell function. Can transform NK cell phenotype from peripheral to decidual during pregnancy. Astrocyte derived galectin-9 enhances microglial TNF production. May play a role in thymocyte-epithelial interactions relevant to the biology of the thymus. May provide the molecular basis for urate flux across cell membranes, allowing urate that is formed during purine metabolism to efflux from cells and serving as an electrogenic transporter that plays an important role in renal and gastrointestinal urate excretion. Highly selective to the anion urate. Its function is as follows. Acts as an eosinophil chemoattractant. It also inhibits angiogenesis. Suppresses IFNG production by natural killer cells. In Homo sapiens (Human), this protein is Galectin-9 (LGALS9).